A 337-amino-acid chain; its full sequence is uncharacterized protein (337 aa).

A coiled-coil region spans residues 248-276 (NELKAETTIQVLREQLRQEKKLKEQVLSL). Positions 285–337 (GGRGEEFGKPDETPSSASVGDDNFPSSTNHTFEARRRPSSLSSGGALKPSKIL) are disordered. A compositionally biased stretch (basic and acidic residues) spans 287–296 (RGEEFGKPDE). Polar residues predominate over residues 297 to 315 (TPSSASVGDDNFPSSTNHT).

This is an uncharacterized protein from Invertebrate iridescent virus 3 (IIV-3).